A 92-amino-acid polypeptide reads, in one-letter code: Small archaeal modifier protein 3 (92 aa).

Glycyl lysine isopeptide (Lys-Gly) (interchain with G-Cter in SAMP3) cross-links involve residues K18, K55, and K62. Position 92 is a glycyl adenylate; alternate (G92). Residue G92 forms a Glycyl lysine isopeptide (Gly-Lys) (interchain with K-? in acceptor proteins); alternate linkage.

In terms of assembly, monomer. In terms of processing, the C-terminal glycine is likely acyl-adenylated (-COAMP) by UbaA.

In terms of biological role, functions as a protein modifier covalently attached to lysine residues of substrate proteins. The protein modification process is termed sampylation and involves the formation of an isopeptide bond between the SAMP3 C-terminal glycine carboxylate and the epsilon-amino group of lysine residues on target proteins. Seems to be able to form polymeric chains with itself at Lys-18, Lys-55 and Lys-62, similar to ubiquitin and other ubiquitin-like proteins. SAMP3 appears not to serve as a proteolytic signal in the cell to target proteins for degradation by proteasomes. May regulate molybdenum cofactor (MoCo) biosynthesis by inhibiting the activity of MPT synthase MoaE under aerobic conditions, providing a hierarchy of oxygen use prior to that of alternative electron acceptors such as DMSO. This is Small archaeal modifier protein 3 (samp3) from Haloferax volcanii (strain ATCC 29605 / DSM 3757 / JCM 8879 / NBRC 14742 / NCIMB 2012 / VKM B-1768 / DS2) (Halobacterium volcanii).